The following is a 203-amino-acid chain: N-(5'-phosphoribosyl)anthranilate isomerase (203 aa).

The protein belongs to the TrpF family.

It catalyses the reaction N-(5-phospho-beta-D-ribosyl)anthranilate = 1-(2-carboxyphenylamino)-1-deoxy-D-ribulose 5-phosphate. It participates in amino-acid biosynthesis; L-tryptophan biosynthesis; L-tryptophan from chorismate: step 3/5. The protein is N-(5'-phosphoribosyl)anthranilate isomerase of Caldanaerobacter subterraneus subsp. tengcongensis (strain DSM 15242 / JCM 11007 / NBRC 100824 / MB4) (Thermoanaerobacter tengcongensis).